The primary structure comprises 33 residues: Natriuretic peptide NP2 (33 aa).

Cysteine 10 and cysteine 26 are oxidised to a cystine.

As to expression, expressed by the venom gland.

The protein resides in the secreted. Functionally, snake venom natriuretic peptide that shows an increase in perfusion pressure, urinary flow and glomerular filtration rate. Reduces total and proximal tubular transport of sodium. In the aortic ring assay, causes a relaxant effect in endothelium-intact thoracic aortic rings precontracted with phenylephrine in the presence and absence of isatin, a natriuretic receptor antagonist. This chain is Natriuretic peptide NP2, found in Crotalus durissus cascavella (Northeastern Brazilian rattlesnake).